A 150-amino-acid polypeptide reads, in one-letter code: MQVLTKRYPKNCLLKVMDRYSAVVRNMEQVVMIPSLLRDVELSGSGGSVQDGAPDLYTYFTMLKSICVEVDHGLLPREEWQAKVAGNEGSEAENEAAETEEAEEDRLSEELDLEAQFHLHFSSLHHILTHLTQKAQEVTQKYQEMTGQVL.

The disordered stretch occupies residues 83–105 (KVAGNEGSEAENEAAETEEAEED). Ser-90 carries the post-translational modification Phosphoserine. Over residues 90 to 105 (SEAENEAAETEEAEED) the composition is skewed to acidic residues.

The protein belongs to the SPOT14 family. Homodimer. Heterodimer with MID1IP1. Interacts with THRB and PLAGL1. In terms of tissue distribution, highly expressed in liver, lactating mammary gland, epididymal, retroperitoneal and brown fat. Mainly expressed in tissues that synthesize triglycerides.

It is found in the nucleus. It localises to the cytoplasm. In terms of biological role, plays a role in the regulation of lipogenesis, especially in lactating mammary gland. Important for the biosynthesis of triglycerides with medium-length fatty acid chains. May modulate lipogenesis by interacting with MID1IP1 and preventing its interaction with ACACA. May function as transcriptional coactivator. May modulate the transcription factor activity of THRB. This Rattus norvegicus (Rat) protein is Thyroid hormone-inducible hepatic protein (Thrsp).